The sequence spans 1766 residues: DNA-directed RNA polymerase II subunit RPB1-B (1766 aa).

Cys69, Cys72, Cys79, and His82 together coordinate Zn(2+). Residues Asp487, Asp489, and Asp491 each coordinate Mg(2+). The interval 813–825 (PHEFFFHTMAGRE) is bridging helix. The disordered stretch occupies residues 1660 to 1766 (HAMSSAAPPS…EFGDEEEEEQ (107 aa)). A compositionally biased stretch (basic and acidic residues) spans 1706–1716 (RGDEPSTHRSD). Residues 1742 to 1756 (PTAKTPQQAAPPTAA) are compositionally biased toward low complexity.

The protein belongs to the RNA polymerase beta' chain family. Component of the RNA polymerase II (Pol II) complex consisting of 12 subunits.

The protein localises to the nucleus. The catalysed reaction is RNA(n) + a ribonucleoside 5'-triphosphate = RNA(n+1) + diphosphate. DNA-dependent RNA polymerase catalyzes the transcription of DNA into RNA using the four ribonucleoside triphosphates as substrates. Largest and catalytic component of RNA polymerase II which synthesizes mRNA precursors and many functional non-coding RNAs. Forms the polymerase active center together with the second largest subunit. Pol II is the central component of the basal RNA polymerase II transcription machinery. It is composed of mobile elements that move relative to each other. RPB1 is part of the core element with the central large cleft, the clamp element that moves to open and close the cleft and the jaws that are thought to grab the incoming DNA template. At the start of transcription, a single-stranded DNA template strand of the promoter is positioned within the central active site cleft of Pol II. A bridging helix emanates from RPB1 and crosses the cleft near the catalytic site and is thought to promote translocation of Pol II by acting as a ratchet that moves the RNA-DNA hybrid through the active site by switching from straight to bent conformations at each step of nucleotide addition. During transcription elongation, Pol II moves on the template as the transcript elongates. The polypeptide is DNA-directed RNA polymerase II subunit RPB1-B (TRP5.9) (Trypanosoma brucei brucei).